The sequence spans 112 residues: UPF0342 protein SPP_1392 (112 aa).

The protein belongs to the UPF0342 family.

In Streptococcus pneumoniae (strain P1031), this protein is UPF0342 protein SPP_1392.